The following is a 113-amino-acid chain: U11-theraphotoxin-Hhn1p (113 aa).

Positions 1-21 (MNTVRVTFLLVFVLAVSLGQA) are cleaved as a signal peptide. Residues 22 to 74 (DKDENRMEMQEKTEQGKSYLDFAENLLLQKLEELEAKLLEEDSEESRNSRQKR) constitute a propeptide that is removed on maturation. The interval 61–83 (EEDSEESRNSRQKRCIGEGVPCD) is disordered. 3 disulfide bridges follow: C75/C90, C82/C95, and C89/C110.

This sequence belongs to the neurotoxin 14 (magi-1) family. 01 (HNTX-16) subfamily. Expressed by the venom gland.

The protein resides in the secreted. Probable ion channel inhibitor. The sequence is that of U11-theraphotoxin-Hhn1p from Cyriopagopus hainanus (Chinese bird spider).